A 75-amino-acid polypeptide reads, in one-letter code: Sec-independent protein translocase protein TatA (75 aa).

The chain crosses the membrane as a helical span at residues 1 to 21 (MGSFSIWHWLVVLAIVLLVFG). The interval 41–75 (KGMRDEDKPNAQLGDESRTQDASRTAQDEHDRNAR) is disordered.

This sequence belongs to the TatA/E family. As to quaternary structure, the Tat system comprises two distinct complexes: a TatABC complex, containing multiple copies of TatA, TatB and TatC subunits, and a separate TatA complex, containing only TatA subunits. Substrates initially bind to the TatABC complex, which probably triggers association of the separate TatA complex to form the active translocon.

The protein resides in the cell inner membrane. In terms of biological role, part of the twin-arginine translocation (Tat) system that transports large folded proteins containing a characteristic twin-arginine motif in their signal peptide across membranes. TatA could form the protein-conducting channel of the Tat system. In Stenotrophomonas maltophilia (strain K279a), this protein is Sec-independent protein translocase protein TatA.